The primary structure comprises 232 residues: Enolase-phosphatase E1 (232 aa).

This sequence belongs to the HAD-like hydrolase superfamily. MasA/MtnC family. In terms of assembly, monomer. Requires Mg(2+) as cofactor.

The catalysed reaction is 5-methylsulfanyl-2,3-dioxopentyl phosphate + H2O = 1,2-dihydroxy-5-(methylsulfanyl)pent-1-en-3-one + phosphate. It participates in amino-acid biosynthesis; L-methionine biosynthesis via salvage pathway; L-methionine from S-methyl-5-thio-alpha-D-ribose 1-phosphate: step 3/6. The protein operates within amino-acid biosynthesis; L-methionine biosynthesis via salvage pathway; L-methionine from S-methyl-5-thio-alpha-D-ribose 1-phosphate: step 4/6. Its function is as follows. Bifunctional enzyme that catalyzes the enolization of 2,3-diketo-5-methylthiopentyl-1-phosphate (DK-MTP-1-P) into the intermediate 2-hydroxy-3-keto-5-methylthiopentenyl-1-phosphate (HK-MTPenyl-1-P), which is then dephosphorylated to form the acireductone 1,2-dihydroxy-3-keto-5-methylthiopentene (DHK-MTPene). In Nocardia farcinica (strain IFM 10152), this protein is Enolase-phosphatase E1.